A 401-amino-acid chain; its full sequence is DNA replication and repair protein RecF (401 aa).

Position 30–37 (30–37 (GYNGIGKT)) interacts with ATP.

This sequence belongs to the RecF family.

Its subcellular location is the cytoplasm. Functionally, the RecF protein is involved in DNA metabolism; it is required for DNA replication and normal SOS inducibility. RecF binds preferentially to single-stranded, linear DNA. It also seems to bind ATP. The protein is DNA replication and repair protein RecF of Arthrobacter sp. (strain FB24).